The sequence spans 443 residues: Xaa-Pro dipeptidase (443 aa).

The Mn(2+) site is built by Asp246, Asp257, His339, Glu384, and Glu423.

The protein belongs to the peptidase M24B family. Bacterial-type prolidase subfamily. Requires Mn(2+) as cofactor.

It catalyses the reaction Xaa-L-Pro dipeptide + H2O = an L-alpha-amino acid + L-proline. In terms of biological role, splits dipeptides with a prolyl residue in the C-terminal position. The protein is Xaa-Pro dipeptidase of Escherichia coli O7:K1 (strain IAI39 / ExPEC).